The sequence spans 335 residues: Phosphate acyltransferase (335 aa).

Belongs to the PlsX family. Homodimer. Probably interacts with PlsY.

Its subcellular location is the cytoplasm. The catalysed reaction is a fatty acyl-[ACP] + phosphate = an acyl phosphate + holo-[ACP]. It participates in lipid metabolism; phospholipid metabolism. Its function is as follows. Catalyzes the reversible formation of acyl-phosphate (acyl-PO(4)) from acyl-[acyl-carrier-protein] (acyl-ACP). This enzyme utilizes acyl-ACP as fatty acyl donor, but not acyl-CoA. The sequence is that of Phosphate acyltransferase from Alkaliphilus oremlandii (strain OhILAs) (Clostridium oremlandii (strain OhILAs)).